A 2243-amino-acid chain; its full sequence is Zinc finger FYVE domain-containing protein 26 homolog (2243 aa).

Disordered stretches follow at residues 386-416 and 514-556; these read SQRK…RPTA and KKKA…GKAS. The segment covering 393–408 has biased composition (acidic residues); it reads GENDEEDDEQYVDDDV. A Phosphotyrosine modification is found at tyrosine 403. Over residues 517-528 the composition is skewed to basic and acidic residues; it reads ASSDDESRERSN. Over residues 534–543 the composition is skewed to basic residues; the sequence is NRRKARRQRR. Residues 617 to 644 form an LRR 1 repeat; that stretch reads KKIIETFHLEHSQLNRELHFMEQQQLVK. Position 1424 is a phosphoserine (serine 1424). The FYVE-type zinc finger occupies 1444–1500; the sequence is DEEASHCMCCRRAAFTMLMRRHHCRRCGRVVCYACSTHRIRIPELYDELEVRICNDC. Positions 1450, 1453, 1467, 1470, 1475, 1478, 1497, and 1500 each coordinate Zn(2+). Residues 1505-1534 form a disordered region; that stretch reads TPAKDQGDGTSSERSAISGQVSKSSGRSDS. Over residues 1512 to 1534 the composition is skewed to polar residues; it reads DGTSSERSAISGQVSKSSGRSDS. An LRR 2 repeat occupies 1887–1912; the sequence is YPQLANGGLNVLMDELQQLDDAQFTA.

It belongs to the ZFYVE26 family.

Functionally, phosphatidylinositol 3-phosphate (PtdIns[3]P)-binding protein. Involved in autophagy. In Drosophila melanogaster (Fruit fly), this protein is Zinc finger FYVE domain-containing protein 26 homolog.